The following is a 243-amino-acid chain: MENQKEKILVVDDEASIRRILETRLTIIGYEVITASNGEEALLVFRKEYPSLVVLDVMMPKLDGYGVCQELRKESDVPIIMLTALGEVCDRITGLEIGADDYVVKPFSPKELEARIRSVLRRADKITTSLGVPNSGIISIGFLKIDTNKRQVYKNNERVRLTGMEFSLLELLVSKAGEPFSRASILQEVWGYTPERHVDTRVVDVHISRLRAKLEDDPSNPDLILTARGTGYLFQRIIEMNKL.

The 114-residue stretch at 7-120 (KILVVDDEAS…ELEARIRSVL (114 aa)) folds into the Response regulatory domain. Position 56 is a 4-aspartylphosphate (Asp56). A DNA-binding region (H-T-H motif) is located at residues 76-94 (DVPIIMLTALGEVCDRITG). The segment at residues 135–236 (SGIISIGFLK…ARGTGYLFQR (102 aa)) is a DNA-binding region (ompR/PhoB-type).

The protein localises to the plastid. Its subcellular location is the chloroplast. Its function is as follows. Probable promoter-specific protein mediating the interaction between DNA and RNA polymerase. This is Probable transcriptional regulator ycf27 (ycf27) from Pyropia yezoensis (Susabi-nori).